The following is a 235-amino-acid chain: ATP synthase subunit a (235 aa).

Transmembrane regions (helical) follow at residues 17-37 (TTNIVSGLIIYAIVFFTLYGM), 76-96 (SFFAFVLFVFIFFANQFGLIF), 113-133 (PVVTLTLSLMVMVLAFAAGVA), 179-201 (LLMSLIANMAFSHGILTIIPGLF), and 211-230 (VFIGSIQAYVFVTLTTVYIS).

The protein belongs to the ATPase A chain family. As to quaternary structure, F-type ATPases have 2 components, CF(1) - the catalytic core - and CF(0) - the membrane proton channel. CF(1) has five subunits: alpha(3), beta(3), gamma(1), delta(1), epsilon(1). CF(0) has three main subunits: a(1), b(2) and c(9-12). The alpha and beta chains form an alternating ring which encloses part of the gamma chain. CF(1) is attached to CF(0) by a central stalk formed by the gamma and epsilon chains, while a peripheral stalk is formed by the delta and b chains.

Its subcellular location is the cell membrane. In terms of biological role, key component of the proton channel; it plays a direct role in the translocation of protons across the membrane. This chain is ATP synthase subunit a, found in Limosilactobacillus reuteri subsp. reuteri (strain JCM 1112) (Lactobacillus reuteri).